The following is a 1362-amino-acid chain: Insulin receptor (1362 aa).

An N-terminal signal peptide occupies residues 1–37 (MGQGVLRGEGHPNNNPNSKVGWKSLVGIITIFMLILC). The segment at 38–184 (DQSDGKICYS…DSVEDNYIEL (147 aa)) is leucine-rich region. Cysteine 45 and cysteine 63 are oxidised to a cystine. Asparagine 53, asparagine 115, and asparagine 148 each carry an N-linked (GlcNAc...) asparagine glycan. Disulfide bonds link cysteine 163/cysteine 192, cysteine 196/cysteine 219, cysteine 206/cysteine 225, cysteine 229/cysteine 238, cysteine 233/cysteine 244, cysteine 245/cysteine 253, cysteine 249/cysteine 262, cysteine 265/cysteine 274, cysteine 278/cysteine 290, cysteine 296/cysteine 321, cysteine 303/cysteine 311, cysteine 325/cysteine 338, cysteine 341/cysteine 345, and cysteine 349/cysteine 370. N-linked (GlcNAc...) asparagine glycosylation occurs at asparagine 332. 3 N-linked (GlcNAc...) asparagine glycosylation sites follow: asparagine 374, asparagine 434, and asparagine 455. Cysteine 472 and cysteine 505 are disulfide-bonded. Fibronectin type-III domains follow at residues 508-629 (NLLT…TNET) and 633-730 (VPLD…IQKE). 5 N-linked (GlcNAc...) asparagine glycosylation sites follow: asparagine 551, asparagine 627, asparagine 642, asparagine 660, and asparagine 707. 2 disulfide bridges follow: cysteine 683–cysteine 896 and cysteine 822–cysteine 830. The tract at residues 694–714 (WTPPTEIDENGNENQTEHTSV) is disordered. Residues 705–714 (NENQTEHTSV) are compositionally biased toward polar residues. An insulin-binding region spans residues 741–749 (ENYLHNEVF). Residues 759 to 951 (DLFGVANGTL…PDHPHSNIVK (193 aa)) are Extracellular-facing. Residues asparagine 765 and asparagine 779 are each glycosylated (N-linked (GlcNAc...) asparagine). The Fibronectin type-III 3 domain maps to 849 to 944 (VVGPITYEYV…EQAYFQVPDH (96 aa)). 2 N-linked (GlcNAc...) asparagine glycosylation sites follow: asparagine 917 and asparagine 930. The chain crosses the membrane as a helical span at residues 952-972 (IITGPIIAVFLLLIVLVYCVV). The Cytoplasmic portion of the chain corresponds to 973 to 1362 (QKKKDAEGPA…ILSLPRSSPS (390 aa)). Tyrosine 993 carries the post-translational modification Phosphotyrosine; by autocatalysis. The region spanning 1012–1287 (INLLRELGQG…MLKDDLRPSF (276 aa)) is the Protein kinase domain. ATP-binding positions include serine 1022, lysine 1046, and 1093–1099 (ELMAHGD). Residue aspartate 1148 is the Proton donor/acceptor of the active site. Residues 1152–1153 (RN) and aspartate 1166 contribute to the ATP site. A phosphotyrosine; by autocatalysis mark is found at tyrosine 1174, tyrosine 1178, tyrosine 1179, tyrosine 1335, and tyrosine 1341.

The protein belongs to the protein kinase superfamily. Tyr protein kinase family. Insulin receptor subfamily. In terms of assembly, tetramer of 2 alpha and 2 beta chains linked by disulfide bonds. The alpha chains contribute to the formation of the ligand-binding domain, while the beta chains carry the kinase domain. Autophosphorylated on tyrosine residues in response to insulin. Localized mainly to the envelope in oocytes. Localized to the animal hemisphere during early embryonic cleavage. Expressed during organogenesis in regions of ecto- and mesodermic origins. Expressed in the entire encephalon, the otic and optic vesicles, the gills, the somites and the pronephric tubules of the embryo. Also found in adult liver, muscle and regenerated forelimbs.

It is found in the cell membrane. It catalyses the reaction L-tyrosyl-[protein] + ATP = O-phospho-L-tyrosyl-[protein] + ADP + H(+). Autophosphorylation activates the kinase activity. Functionally, receptor tyrosine kinase which mediates actions of insulin. May be required for forelimb regeneration. This chain is Insulin receptor (insr), found in Xenopus laevis (African clawed frog).